The sequence spans 305 residues: Elongation factor Ts (305 aa).

The interval 79-82 is involved in Mg(2+) ion dislocation from EF-Tu; that stretch reads TDFV.

The protein belongs to the EF-Ts family.

It localises to the cytoplasm. Associates with the EF-Tu.GDP complex and induces the exchange of GDP to GTP. It remains bound to the aminoacyl-tRNA.EF-Tu.GTP complex up to the GTP hydrolysis stage on the ribosome. The chain is Elongation factor Ts from Brucella anthropi (strain ATCC 49188 / DSM 6882 / CCUG 24695 / JCM 21032 / LMG 3331 / NBRC 15819 / NCTC 12168 / Alc 37) (Ochrobactrum anthropi).